The sequence spans 582 residues: Type I secretion system ATP-binding protein PrsD (582 aa).

Helical transmembrane passes span 22-42 (FIGV…GSFF), 59-79 (LIAL…FELI), and 148-168 (IAIC…GGLI). Residues 22–301 (FIGVGVASAL…AIGNWRGLVA (280 aa)) form the ABC transmembrane type-1 domain. An ABC transporter domain is found at 332 to 568 (LTVEGLASGP…VLRPQQVERQ (237 aa)). Residue 366–373 (GPSASGKS) coordinates ATP.

It belongs to the ABC transporter superfamily. In terms of assembly, part of a type I secretion system composed of PrsD and PrsE.

Its subcellular location is the cell inner membrane. Mediates secretion of glycanase ExsH. This is Type I secretion system ATP-binding protein PrsD (prsD) from Rhizobium meliloti (strain 1021) (Ensifer meliloti).